Reading from the N-terminus, the 429-residue chain is Enolase (429 aa).

A (2R)-2-phosphoglycerate-binding site is contributed by glutamine 163. Glutamate 205 (proton donor) is an active-site residue. Mg(2+) is bound by residues aspartate 242, glutamate 286, and aspartate 313. Positions 338, 367, 368, and 389 each coordinate (2R)-2-phosphoglycerate. Catalysis depends on lysine 338, which acts as the Proton acceptor.

Belongs to the enolase family. Mg(2+) is required as a cofactor.

Its subcellular location is the cytoplasm. It localises to the secreted. The protein resides in the cell surface. The enzyme catalyses (2R)-2-phosphoglycerate = phosphoenolpyruvate + H2O. Its pathway is carbohydrate degradation; glycolysis; pyruvate from D-glyceraldehyde 3-phosphate: step 4/5. In terms of biological role, catalyzes the reversible conversion of 2-phosphoglycerate (2-PG) into phosphoenolpyruvate (PEP). It is essential for the degradation of carbohydrates via glycolysis. This chain is Enolase, found in Thermoanaerobacter sp. (strain X514).